We begin with the raw amino-acid sequence, 256 residues long: Protein CC2D2B homolog (256 aa).

The segment at 1–24 is disordered; it reads MSEEMDNVTAEEITDKHLQKDLDA. Residues 13–22 show a composition bias toward basic and acidic residues; sequence ITDKHLQKDL. Coiled coils occupy residues 136-159 and 194-214; these read DLLKVKAADYEDDQEQIKKQKANI and EIYKKTCNKMENRLLKLEEGK.

The chain is Protein CC2D2B homolog from Macaca fascicularis (Crab-eating macaque).